Reading from the N-terminus, the 82-residue chain is MQPLQISAIVALVVAAIIAIVVWSIALLEYRKLLRQRKIDRLIDRIRERAEDSGNESEGDQEELSALVEMGGHDAPWDIDDL.

Topologically, residues 1 to 7 (MQPLQIS) are extracellular. The helical transmembrane segment at 8 to 28 (AIVALVVAAIIAIVVWSIALL) threads the bilayer. The Cytoplasmic segment spans residues 29–82 (EYRKLLRQRKIDRLIDRIRERAEDSGNESEGDQEELSALVEMGGHDAPWDIDDL). Phosphoserine; by host CK2 occurs at positions 53 and 57.

The protein belongs to the HIV-1 VPU protein family. As to quaternary structure, homopentamer. Interacts with host CD4 and BRTC; these interactions induce proteasomal degradation of CD4. Interacts with host BST2; this interaction leads to the degradation of host BST2. Interacts with host FBXW11. Interacts with host AP1M1; this interaction plays a role in the mistrafficking and subsequent degradation of host BST2. Interacts with host RANBP2; this interaction allows Vpu to down-regulate host BLM sumoylation. In terms of processing, phosphorylated by host CK2. This phosphorylation is necessary for interaction with human BTRC and degradation of CD4.

The protein resides in the host membrane. Ion channel activity is inhibited by hexamethylene amiloride in vitro. In terms of biological role, enhances virion budding by targeting host CD4 and Tetherin/BST2 to proteasome degradation. Degradation of CD4 prevents any unwanted premature interactions between viral Env and its host receptor CD4 in the endoplasmic reticulum. Degradation of antiretroviral protein Tetherin/BST2 is important for virion budding, as BST2 tethers new viral particles to the host cell membrane. Mechanistically, Vpu bridges either CD4 or BST2 to BTRC, a substrate recognition subunit of the Skp1/Cullin/F-box protein E3 ubiquitin ligase, induces their ubiquitination and subsequent proteasomal degradation. The alteration of the E3 ligase specificity by Vpu seems to promote the degradation of host IKBKB, leading to NF-kappa-B down-regulation and subsequent apoptosis. Acts as a viroporin that forms an oligomeric ion channel in membranes. Modulates the host DNA repair mechanisms to promote degradation of nuclear viral cDNA in cells that are already productively infected in order to suppress immune sensing and proviral hyper-integration (superinfection). Manipulates PML-NBs and modulates SUMOylation of host BLM protein thereby enhancing its DNA-end processing activity toward viral unintegrated linear DNA. Also inhibits RAD52-mediated homologous repair of viral cDNA, preventing the generation of dead-end circular forms of single copies of the long terminal repeat and permitting sustained nucleolytic attack. This is Protein Vpu from Homo sapiens (Human).